The sequence spans 158 residues: C-type lectin lectoxin-Enh5 (158 aa).

Residues 1 to 23 (MGQFTVVSLGLLAVFLSLSGAKG) form the signal peptide. Intrachain disulfides connect C26-C37, C54-C154, and C129-C146. Residues 33–155 (RNGVCNKLFP…CASLHPFICQ (123 aa)) form the C-type lectin domain. The short motif at 119–121 (EPN) is the Mannose-binding element. Residues E127, N142, and D143 each contribute to the Ca(2+) site.

This sequence belongs to the true venom lectin family. In terms of tissue distribution, expressed by the venom gland.

The protein resides in the secreted. In terms of biological role, mannose-binding lectin which recognizes specific carbohydrate structures and agglutinates a variety of animal cells by binding to cell-surface glycoproteins and glycolipids. May be a calcium-dependent lectin. The sequence is that of C-type lectin lectoxin-Enh5 from Pseudoferania polylepis (Macleay's water snake).